Here is a 58-residue protein sequence, read N- to C-terminus: UPF0391 membrane protein Maqu_2901 (58 aa).

Helical transmembrane passes span Trp4–Ala24 and Ala28–Val48.

This sequence belongs to the UPF0391 family.

It localises to the cell membrane. The protein is UPF0391 membrane protein Maqu_2901 of Marinobacter nauticus (strain ATCC 700491 / DSM 11845 / VT8) (Marinobacter aquaeolei).